Here is a 361-residue protein sequence, read N- to C-terminus: tRNA-specific 2-thiouridylase MnmA (361 aa).

ATP-binding positions include 8–15 and M34; that span reads GMSGGVDS. The interval 94 to 96 is interaction with target base in tRNA; the sequence is NPD. C99 acts as the Nucleophile in catalysis. The cysteines at positions 99 and 195 are disulfide-linked. G123 contacts ATP. An interaction with tRNA region spans residues 145–147; it reads KDQ. Catalysis depends on C195, which acts as the Cysteine persulfide intermediate. The interval 307–308 is interaction with tRNA; it reads RY.

It belongs to the MnmA/TRMU family.

It is found in the cytoplasm. It carries out the reaction S-sulfanyl-L-cysteinyl-[protein] + uridine(34) in tRNA + AH2 + ATP = 2-thiouridine(34) in tRNA + L-cysteinyl-[protein] + A + AMP + diphosphate + H(+). Its function is as follows. Catalyzes the 2-thiolation of uridine at the wobble position (U34) of tRNA, leading to the formation of s(2)U34. The sequence is that of tRNA-specific 2-thiouridylase MnmA from Legionella pneumophila subsp. pneumophila (strain Philadelphia 1 / ATCC 33152 / DSM 7513).